A 312-amino-acid polypeptide reads, in one-letter code: Cytochrome c biogenesis protein CcsA (312 aa).

The next 8 helical transmembrane spans lie at 12–32 (NLVF…LSFF), 47–67 (IVAN…AGYF), 72–92 (LYES…YVEF), 98–118 (LVGA…NLTL), 144–164 (MMLS…FLVI), 220–240 (IIGL…VWAN), 254–271 (TWAL…HSRI), and 281–301 (AILG…VNFL).

This sequence belongs to the CcmF/CycK/Ccl1/NrfE/CcsA family. May interact with Ccs1.

It is found in the plastid. The protein resides in the chloroplast thylakoid membrane. Required during biogenesis of c-type cytochromes (cytochrome c6 and cytochrome f) at the step of heme attachment. This chain is Cytochrome c biogenesis protein CcsA, found in Trieres chinensis (Marine centric diatom).